The primary structure comprises 130 residues: Albumin-1 A (130 aa).

The signal sequence occupies residues Met1–Ala26. Cystine bridges form between Cys29/Cys46, Cys33/Cys48, and Cys41/Cys58. 2 consecutive propeptides follow at residues Val64–Asn69 and Leu123–Ala130.

The C-terminal glycine may be removed from PA1b. As to expression, major component of both the cotyledons and embryonic axes of mature seeds.

In terms of biological role, PA1b binds to basic 7S globulin (BG) and stimulates its phosphorylation activity. Involved in the signal transduction system to regulate the growth and differentiation as a hormone peptide. Toxic to various insects through binding to a high affinity binding site in the insect gut. This is Albumin-1 A from Pisum sativum (Garden pea).